We begin with the raw amino-acid sequence, 144 residues long: Transcription antitermination protein NusB (144 aa).

The protein belongs to the NusB family.

Its function is as follows. Involved in transcription antitermination. Required for transcription of ribosomal RNA (rRNA) genes. Binds specifically to the boxA antiterminator sequence of the ribosomal RNA (rrn) operons. The polypeptide is Transcription antitermination protein NusB (Leifsonia xyli subsp. xyli (strain CTCB07)).